The following is a 155-amino-acid chain: Cytochrome c-type biogenesis protein CcmE (155 aa).

Over 1–8 (MNPLRKKR) the chain is Cytoplasmic. Residues 9–29 (LLIIAALLAGVGLAMTLALGA) form a helical; Signal-anchor for type II membrane protein membrane-spanning segment. The Periplasmic portion of the chain corresponds to 30-155 (LKENINLFYT…GGSSTPAKQG (126 aa)). 2 residues coordinate heme: histidine 124 and tyrosine 128. Positions 134–155 (TKALRDSGQAAPGGSSTPAKQG) are disordered.

This sequence belongs to the CcmE/CycJ family.

Its subcellular location is the cell inner membrane. Heme chaperone required for the biogenesis of c-type cytochromes. Transiently binds heme delivered by CcmC and transfers the heme to apo-cytochromes in a process facilitated by CcmF and CcmH. This Pseudomonas savastanoi pv. phaseolicola (strain 1448A / Race 6) (Pseudomonas syringae pv. phaseolicola (strain 1448A / Race 6)) protein is Cytochrome c-type biogenesis protein CcmE.